An 884-amino-acid polypeptide reads, in one-letter code: MNIPTKFTTSKIRSDFLEFFKNKGHKIVPSAPLVPGNDPTLLFTNSGMVQFKDVFLGAEKRSEVRVADVQCCLRAGGKHNDLDSVGYTARHHTFFEMLGNWSFGDYFKKEAITWAWELLTHVWELPPERLLVTVYHTDDESYALWRDMVGVPEDRIVRIGDNKGAPFASDNFWQMADTGPCGPCTEIFYDHGEHIPGGPPGSPDEDGDRFIEIWNLVFMQFDRQSDGTLVPLPAPCVDTGMGLERLAAILQHVHTNYEIDLFQTLILKAAELTAVADVQNKSLRVIADHSRACAFLIVDGVLPSNEGRGYVLRRIIRRALRHGWMLGVRQPFFNNMVPTLVAVMGDAYPKLQAAAESVMRTLLAEEERFAETLDVGMKIFNEVAAKVANGVIPGSDAFRLYDTYGFPVDLTADIARERGMSVDMVGFEAAMTQQRKTARAAGKFGRGVQLSAERAAMLSPTVFLGYEQLQADGLRVVALLSDGGLTDSASVGDEVIVLTDRTPFYAESGGQVGDIGTLMASDGVRLEVTDTQKLMGQFHGHVARIVQGGVKVGDVLSGSVAVARRKMVALNHSATHLLHCALRSVFGTHVVQKGSLVAPDRLRFDFSHFEPIAAAQMTLIERMVNDEVRANHLVMIEQMGMQAALDAGAMALFGEKYGEHVRVVTMGTSVELCGGTHINRTGDIGLFKIISECGVSSGVRRIEAVTGESALNHVLAEEHRLYEVAGLIGSNANDVVNHIRQLTDRQKTLERELEKLKGKLISGTITDLLSTAVNVADVKVVAARLDGLDGKALREALDRLKLQLSDAVIVLAGVTGGKVALVTAVNGRRAMGKVKADTLLSHVATQINGRGGGRVDFAQGGGEDGPSLRSALDGVATWVKQHLN.

Positions 572, 576, 673, and 677 each coordinate Zn(2+).

This sequence belongs to the class-II aminoacyl-tRNA synthetase family. The cofactor is Zn(2+).

Its subcellular location is the cytoplasm. It carries out the reaction tRNA(Ala) + L-alanine + ATP = L-alanyl-tRNA(Ala) + AMP + diphosphate. Functionally, catalyzes the attachment of alanine to tRNA(Ala) in a two-step reaction: alanine is first activated by ATP to form Ala-AMP and then transferred to the acceptor end of tRNA(Ala). Also edits incorrectly charged Ser-tRNA(Ala) and Gly-tRNA(Ala) via its editing domain. This Xylella fastidiosa (strain 9a5c) protein is Alanine--tRNA ligase.